The following is a 1257-amino-acid chain: Endochitinase A (1257 aa).

Positions Met1–Ala21 are cleaved as a signal peptide. A GH18 domain is found at Ser28 to Val339. Glu175 acts as the Proton donor in catalysis. Disordered stretches follow at residues Thr364 to Val429, Thr595 to Ile980, and Asp1141 to Thr1174. Over residues Thr595–Val696 the composition is skewed to low complexity. Polar residues predominate over residues Lys700 to Ile715. The segment covering Ala716–Thr935 has biased composition (low complexity). A glycan (N-linked (GlcNAc...) asparagine) is linked at Asn825. The segment covering His940 to Thr964 has biased composition (polar residues). A glycan (N-linked (GlcNAc...) asparagine) is linked at Asn973. A compositionally biased stretch (polar residues) spans Ala1145–Gly1154. Low complexity predominate over residues Ser1156–Thr1174. Residue Gly1231 is the site of GPI-anchor amidated glycine attachment. A propeptide spans Ala1232–Ile1257 (removed in mature form).

It belongs to the glycosyl hydrolase 18 family. Chitinase class III subfamily. Post-translationally, O-glycosylated.

The protein localises to the cell membrane. Its subcellular location is the secreted. The protein resides in the cell wall. The catalysed reaction is Random endo-hydrolysis of N-acetyl-beta-D-glucosaminide (1-&gt;4)-beta-linkages in chitin and chitodextrins.. Functionally, GPI-anchored chitinase involved in the degradation of chitin, a component of the cell walls of fungi and exoskeletal elements of some animals (including worms and arthropods). Required to reshape the cell wall at the sites where cell wall remodeling and/or cell wall maturation actively take place such as sites of conidia formation. This is Endochitinase A (ctcA) from Aspergillus niger (strain ATCC MYA-4892 / CBS 513.88 / FGSC A1513).